The following is a 327-amino-acid chain: Aliphatic sulfonates import ATP-binding protein SsuB (327 aa).

The interval 21-54 is disordered; it reads ELAQPRIADGDAQDAAVYERDGGAHAPPDGDRAD. The span at 37 to 54 shows a compositional bias: basic and acidic residues; that stretch reads VYERDGGAHAPPDGDRAD. The ABC transporter domain maps to 66-285; the sequence is VRLTRVSKRY…ARASAAFAAL (220 aa). Position 98 to 105 (98 to 105) interacts with ATP; sequence GRSGCGKS. The tract at residues 300-327 is disordered; that stretch reads APAAPNAAGPEGASRGRAAPASGLRWAV.

It belongs to the ABC transporter superfamily. Aliphatic sulfonates importer (TC 3.A.1.17.2) family. As to quaternary structure, the complex is composed of two ATP-binding proteins (SsuB), two transmembrane proteins (SsuC) and a solute-binding protein (SsuA).

It localises to the cell inner membrane. The catalysed reaction is ATP + H2O + aliphatic sulfonate-[sulfonate-binding protein]Side 1 = ADP + phosphate + aliphatic sulfonateSide 2 + [sulfonate-binding protein]Side 1.. Its function is as follows. Part of the ABC transporter complex SsuABC involved in aliphatic sulfonates import. Responsible for energy coupling to the transport system. This chain is Aliphatic sulfonates import ATP-binding protein SsuB, found in Burkholderia pseudomallei (strain K96243).